The chain runs to 418 residues: Mitochondrial outer membrane protein SLC25A46 (418 aa).

The interval 1 to 30 (MHPRRPDGFDGLGYRGGARDEQGFGGAFPA) is disordered. Position 32 is a phosphoserine (Ser32). The tract at residues 44–93 (TTPPDIPGSRNLHWGEKSPPYGVPTTSTPYEGPTEEPFSSGGGGSVQGQS) is disordered. The residue at position 45 (Thr45) is a Phosphothreonine. Residues 96 to 187 (QLNRFAGFGI…GIISEFTPLP (92 aa)) form a Solcar 1 repeat. Helical transmembrane passes span 103–123 (FGIG…CIVL), 167–187 (FIVQ…TPLP), 202–222 (HLLL…ASLI), 258–278 (LLPL…HYII), 314–334 (FPEL…LYPL), and 382–402 (VFGF…HAAV). Residues 311–413 (DAYFPELIAN…QITKIIYSTL (103 aa)) form a Solcar 2 repeat.

The protein belongs to the mitochondrial carrier (TC 2.A.29) family. Associates with the mitochondrial contact site and cristae organizing system (MICOS) complex. May associate with the endoplasmic reticulum membrane protein complex (EMC).

It is found in the mitochondrion outer membrane. In terms of biological role, transmembrane protein of the mitochondrial outer membrane that controls mitochondrial organization. May regulate the assembly of the MICOS (mitochondrial contact site and cristae organizing system) complex which is essential to the biogenesis and dynamics of mitochondrial cristae, the inwards folds of the inner mitochondrial membrane. Through its interaction with the EMC (endoplasmic reticulum membrane protein complex), could regulate mitochondrial lipid homeostasis and thereby mitochondrial fission. This chain is Mitochondrial outer membrane protein SLC25A46, found in Homo sapiens (Human).